We begin with the raw amino-acid sequence, 166 residues long: NAD(P)H-quinone oxidoreductase subunit I, chloroplastic (166 aa).

4Fe-4S ferredoxin-type domains follow at residues 55 to 84 and 95 to 124; these read GRIH…VDWK and LNYS…MTEE. 8 residues coordinate [4Fe-4S] cluster: Cys64, Cys67, Cys70, Cys74, Cys104, Cys107, Cys110, and Cys114.

The protein belongs to the complex I 23 kDa subunit family. NDH is composed of at least 16 different subunits, 5 of which are encoded in the nucleus. [4Fe-4S] cluster serves as cofactor.

The protein resides in the plastid. It is found in the chloroplast thylakoid membrane. The catalysed reaction is a plastoquinone + NADH + (n+1) H(+)(in) = a plastoquinol + NAD(+) + n H(+)(out). The enzyme catalyses a plastoquinone + NADPH + (n+1) H(+)(in) = a plastoquinol + NADP(+) + n H(+)(out). Functionally, NDH shuttles electrons from NAD(P)H:plastoquinone, via FMN and iron-sulfur (Fe-S) centers, to quinones in the photosynthetic chain and possibly in a chloroplast respiratory chain. The immediate electron acceptor for the enzyme in this species is believed to be plastoquinone. Couples the redox reaction to proton translocation, and thus conserves the redox energy in a proton gradient. The protein is NAD(P)H-quinone oxidoreductase subunit I, chloroplastic of Steiractinia sodiroi.